A 245-amino-acid polypeptide reads, in one-letter code: 1-(5-phosphoribosyl)-5-[(5-phosphoribosylamino)methylideneamino] imidazole-4-carboxamide isomerase (245 aa).

The active-site Proton acceptor is Asp-8. The active-site Proton donor is Asp-130.

Belongs to the HisA/HisF family.

Its subcellular location is the cytoplasm. It carries out the reaction 1-(5-phospho-beta-D-ribosyl)-5-[(5-phospho-beta-D-ribosylamino)methylideneamino]imidazole-4-carboxamide = 5-[(5-phospho-1-deoxy-D-ribulos-1-ylimino)methylamino]-1-(5-phospho-beta-D-ribosyl)imidazole-4-carboxamide. It participates in amino-acid biosynthesis; L-histidine biosynthesis; L-histidine from 5-phospho-alpha-D-ribose 1-diphosphate: step 4/9. This Pseudomonas fluorescens (strain Pf0-1) protein is 1-(5-phosphoribosyl)-5-[(5-phosphoribosylamino)methylideneamino] imidazole-4-carboxamide isomerase.